Reading from the N-terminus, the 269-residue chain is MQIYLDLLRRILDEGVRREDRTGTGTVSVFGHQMVFDLREGFPLVTTKKIYTRSVFGELLWFLRGDTNVGWLHDNNIHIWDEWADENGDLGPVYGHQWRSWPDDDGTIDQIANVVEQIRTNPWSRRHIVSAWNVAEIKEMALPPCHTLFQFYVTPDDRGTPTWLSCQLYQRSGDTFLGVPFNIASYALLTHLVASVTGLKPLRFVHTLGDAHVYLNHLDQVHEQLKRKPRHRPTLTVNPGIRDIDGFELSDITLTGYDPYPALPAPIAV.

Residues arginine 21 and 125 to 126 (RR) each bind dUMP. The active-site Nucleophile is cysteine 145. DUMP contacts are provided by residues 171–174 (RSGD), asparagine 182, and 212–214 (HVY). Aspartate 174 serves as a coordination point for (6R)-5,10-methylene-5,6,7,8-tetrahydrofolate. Alanine 268 provides a ligand contact to (6R)-5,10-methylene-5,6,7,8-tetrahydrofolate.

It belongs to the thymidylate synthase family. Bacterial-type ThyA subfamily. As to quaternary structure, homodimer.

It localises to the cytoplasm. It carries out the reaction dUMP + (6R)-5,10-methylene-5,6,7,8-tetrahydrofolate = 7,8-dihydrofolate + dTMP. It participates in pyrimidine metabolism; dTTP biosynthesis. Catalyzes the reductive methylation of 2'-deoxyuridine-5'-monophosphate (dUMP) to 2'-deoxythymidine-5'-monophosphate (dTMP) while utilizing 5,10-methylenetetrahydrofolate (mTHF) as the methyl donor and reductant in the reaction, yielding dihydrofolate (DHF) as a by-product. This enzymatic reaction provides an intracellular de novo source of dTMP, an essential precursor for DNA biosynthesis. This chain is Thymidylate synthase, found in Cutibacterium acnes (strain DSM 16379 / KPA171202) (Propionibacterium acnes).